We begin with the raw amino-acid sequence, 202 residues long: Glycerol-3-phosphate acyltransferase (202 aa).

Transmembrane regions (helical) follow at residues 2-22, 82-102, 119-139, and 158-178; these read ANLLFALAAYLIGSVSFAVVV, DTGLAMVALAVFLGHLFPVFH, AIDPILGLGTLATWLIIAFFF, and VLMNGVDVMAGAIFVISVLLI.

This sequence belongs to the PlsY family. As to quaternary structure, probably interacts with PlsX.

Its subcellular location is the cell inner membrane. The catalysed reaction is an acyl phosphate + sn-glycerol 3-phosphate = a 1-acyl-sn-glycero-3-phosphate + phosphate. The protein operates within lipid metabolism; phospholipid metabolism. In terms of biological role, catalyzes the transfer of an acyl group from acyl-phosphate (acyl-PO(4)) to glycerol-3-phosphate (G3P) to form lysophosphatidic acid (LPA). This enzyme utilizes acyl-phosphate as fatty acyl donor, but not acyl-CoA or acyl-ACP. The polypeptide is Glycerol-3-phosphate acyltransferase (Cupriavidus taiwanensis (strain DSM 17343 / BCRC 17206 / CCUG 44338 / CIP 107171 / LMG 19424 / R1) (Ralstonia taiwanensis (strain LMG 19424))).